The following is a 603-amino-acid chain: Putative ankyrin repeat protein FPV162 (603 aa).

ANK repeat units follow at residues 23 to 53, 57 to 87, 91 to 120, 124 to 155, 159 to 189, 193 to 223, 227 to 257, 261 to 291, 295 to 325, 329 to 362, 366 to 397, 401 to 428, 432 to 467, and 504 to 533; these read FKDT…DINV, FKKT…NVNV, FEST…DPNT, NGQT…NVNA, KHNT…DVKI, DGIT…DVNA, EGNT…EVNA, VGDT…NVNA, ISVT…EVNS, YGRT…DIEA, IGGT…DINT, RDET…STNI, SNIT…DIKN, and NNMY…DIYL.

In Vertebrata (FPV), this protein is Putative ankyrin repeat protein FPV162.